Consider the following 299-residue polypeptide: Non-homologous end-joining factor 1 (299 aa).

Residues 1 to 135 (MEELEQGLLM…ASPSLVSQHL (135 aa)) are globular head. Positions 128-170 (PSLVSQHLIRPLMGMSLALQCQVRELATLLHMKDLEIQDYQES) form a coiled coil. Ser132, Ser203, Ser245, and Ser251 each carry phosphoserine; by PRKDC. The interval 224 to 288 (QEVQVGQKHQ…GPLQRPQLSK (65 aa)) is C-terminal tail. Residues 255 to 266 (NQPEQLVSSAPT) show a composition bias toward polar residues. Residues 255–299 (NQPEQLVSSAPTLSAPEKESTGTSGPLQRPQLSKVKRKKPRGLFS) form a disordered region. Ser263 carries the phosphoserine modification. At Thr266 the chain carries Phosphothreonine. Ser287 bears the Phosphoserine mark. Positions 288-299 (KVKRKKPRGLFS) are enriched in basic residues. The XLM motif lies at 289 to 299 (VKRKKPRGLFS).

The protein belongs to the XRCC4-XLF family. XLF subfamily. In terms of assembly, homodimer; mainly exists as a homodimer when not associated with XRCC4. Interacts with XRCC4; the interaction is direct and is mediated via a head-to-head interaction between N-terminal head regions. Component of the core long-range non-homologous end joining (NHEJ) complex (also named DNA-PK complex) composed of PRKDC, LIG4, XRCC4, XRCC6/Ku70, XRCC5/Ku86 and NHEJ1/XLF. Additional component of the NHEJ complex includes PAXX. Following autophosphorylation, PRKDC dissociates from DNA, leading to formation of the short-range NHEJ complex, composed of LIG4, XRCC4, XRCC6/Ku70, XRCC5/Ku86 and NHEJ1/XLF. Interacts with POLL (DNA polymerase lambda); promoting POLL recruitment to double-strand breaks (DSBs) and stimulation of the end-filling activity of POLL. In terms of processing, phosphorylated by PRKDC at the C-terminus in response to DNA damage. Phosphorylations by PRKDC at the C-terminus of XRCC4 and NHEJ1/XLF are highly redundant and regulate ability of the XRCC4-NHEJ1/XLF subcomplex to bridge DNA. Phosphorylation does not prevent interaction with XRCC4 but disrupts ability to bridge DNA and promotes detachment from DNA. In terms of tissue distribution, ubiquitously expressed.

The protein localises to the nucleus. The protein resides in the chromosome. DNA repair protein involved in DNA non-homologous end joining (NHEJ); it is required for double-strand break (DSB) repair and V(D)J recombination and is also involved in telomere maintenance. Plays a key role in NHEJ by promoting the ligation of various mismatched and non-cohesive ends. Together with PAXX, collaborates with DNA polymerase lambda (POLL) to promote joining of non-cohesive DNA ends. May act in concert with XRCC5-XRCC6 (Ku) to stimulate XRCC4-mediated joining of blunt ends and several types of mismatched ends that are non-complementary or partially complementary. In some studies, has been shown to associate with XRCC4 to form alternating helical filaments that bridge DNA and act like a bandage, holding together the broken DNA until it is repaired. Alternatively, it has also been shown that rather than forming filaments, a single NHEJ1 dimer interacts through both head domains with XRCC4 to promote the close alignment of DNA ends. The XRCC4-NHEJ1/XLF subcomplex binds to the DNA fragments of a DSB in a highly diffusive manner and robustly bridges two independent DNA molecules, holding the broken DNA fragments in close proximity to one other. The mobility of the bridges ensures that the ends remain accessible for further processing by other repair factors. Binds DNA in a length-dependent manner. In Homo sapiens (Human), this protein is Non-homologous end-joining factor 1.